Here is a 77-residue protein sequence, read N- to C-terminus: Conotoxin VnMEKL-0111 (77 aa).

A signal peptide spans 1–19; that stretch reads MEKLTILLLVAAVLMSTQA. Residues 20–46 constitute a propeptide that is removed on maturation; it reads LIQHDGEKSQKAKMKFLTARTLSAKTR. Disulfide bonds link Cys-50–Cys-66, Cys-57–Cys-71, and Cys-65–Cys-75.

This sequence belongs to the conotoxin O2 superfamily. Expressed by the venom duct.

The protein resides in the secreted. This is Conotoxin VnMEKL-0111 from Conus ventricosus (Mediterranean cone).